The chain runs to 61 residues: Large ribosomal subunit protein eL37 (61 aa).

The Zn(2+) site is built by Cys-19, Cys-22, Cys-34, and Cys-37. A C4-type zinc finger spans residues 19–37; it reads CRRCGRNAYNVSKHYCAAC.

It belongs to the eukaryotic ribosomal protein eL37 family. It depends on Zn(2+) as a cofactor.

In terms of biological role, binds to the 23S rRNA. This chain is Large ribosomal subunit protein eL37, found in Saccharolobus islandicus (strain L.S.2.15 / Lassen #1) (Sulfolobus islandicus).